The following is a 132-amino-acid chain: Small ribosomal subunit protein uS8 (132 aa).

This sequence belongs to the universal ribosomal protein uS8 family. In terms of assembly, part of the 30S ribosomal subunit. Contacts proteins S5 and S12.

Its function is as follows. One of the primary rRNA binding proteins, it binds directly to 16S rRNA central domain where it helps coordinate assembly of the platform of the 30S subunit. In Xanthomonas oryzae pv. oryzae (strain MAFF 311018), this protein is Small ribosomal subunit protein uS8.